A 442-amino-acid polypeptide reads, in one-letter code: GTPase Der (442 aa).

2 EngA-type G domains span residues 3-167 (PTIV…PADD) and 177-350 (PRVA…AAAM). GTP-binding positions include 9–16 (GRPNVGKS), 56–60 (DTAGF), 119–122 (NKAE), 183–190 (GRPNVGKS), 230–234 (DTAGL), and 295–298 (NKWD). The KH-like domain maps to 351–435 (SNLSTPRLTR…PLRIQFRTAH (85 aa)).

The protein belongs to the TRAFAC class TrmE-Era-EngA-EngB-Septin-like GTPase superfamily. EngA (Der) GTPase family. In terms of assembly, associates with the 50S ribosomal subunit.

Functionally, GTPase that plays an essential role in the late steps of ribosome biogenesis. This is GTPase Der from Azoarcus sp. (strain BH72).